Reading from the N-terminus, the 500-residue chain is NAD(P)H-quinone oxidoreductase chain 4, chloroplastic (500 aa).

The next 14 membrane-spanning stretches (helical) occupy residues 3–23, 37–57, 84–104, 111–129, 134–154, 167–187, 208–228, 242–262, 272–292, 305–325, 330–350, 386–406, 416–436, and 462–482; these read FFPW…VIFF, ICIC…HFQF, GLSI…TLAA, SRLF…IGSF, LLLF…LLSI, FILY…GVGL, ALEI…SPII, HYST…YGLI, AHSI…IYAA, IAYS…SITD, GAIL…FLAG, LALP…GIIT, ILIT…SLSM, and LFVS…PDFV.

The protein belongs to the complex I subunit 4 family.

The protein localises to the plastid. It is found in the chloroplast thylakoid membrane. It catalyses the reaction a plastoquinone + NADH + (n+1) H(+)(in) = a plastoquinol + NAD(+) + n H(+)(out). It carries out the reaction a plastoquinone + NADPH + (n+1) H(+)(in) = a plastoquinol + NADP(+) + n H(+)(out). This is NAD(P)H-quinone oxidoreductase chain 4, chloroplastic from Panax ginseng (Korean ginseng).